Consider the following 346-residue polypeptide: Protease inhibitor Egf1.5b (346 aa).

Positions 1-28 (MYIDTGIMSNNIFLFAFFALVGLTRIEA) are cleaved as a signal peptide. The TIL domain maps to 52-104 (CRENEHYNSTRIECEDECNDRNNKLCYRFQQFCWCNEGYIRNSSHICVKLEDC).

The protein belongs to the polydnaviridae EGF-like motif protein family. As to quaternary structure, interacts with host PAP1, PAP3 and SPH2.

In terms of biological role, counteracts the host humoral immune response by inhibiting the processing and the amidolytic activity of host PAP1 and PAP3. Thereby, melanization of host hemolymph, normally producing several reactive intermediates toxic for viruses, is deregulated and proper immune response cannot occur. This is Protease inhibitor Egf1.5b (O5) from Microplitis demolitor (Parasitoid wasp).